A 262-amino-acid chain; its full sequence is tRNA pseudouridine synthase A (262 aa).

Catalysis depends on D56, which acts as the Nucleophile. Residue Y114 coordinates substrate.

This sequence belongs to the tRNA pseudouridine synthase TruA family. Homodimer.

It carries out the reaction uridine(38/39/40) in tRNA = pseudouridine(38/39/40) in tRNA. In terms of biological role, formation of pseudouridine at positions 38, 39 and 40 in the anticodon stem and loop of transfer RNAs. The sequence is that of tRNA pseudouridine synthase A from Lactiplantibacillus plantarum (strain ATCC BAA-793 / NCIMB 8826 / WCFS1) (Lactobacillus plantarum).